A 131-amino-acid polypeptide reads, in one-letter code: Large-conductance mechanosensitive channel (131 aa).

2 helical membrane-spanning segments follow: residues 14 to 34 (VMDM…VTSL) and 71 to 91 (GNFI…FLLV).

Belongs to the MscL family. As to quaternary structure, homopentamer.

The protein localises to the cell inner membrane. Channel that opens in response to stretch forces in the membrane lipid bilayer. May participate in the regulation of osmotic pressure changes within the cell. The protein is Large-conductance mechanosensitive channel of Dinoroseobacter shibae (strain DSM 16493 / NCIMB 14021 / DFL 12).